Here is a 549-residue protein sequence, read N- to C-terminus: Cytoplasmic trehalase (549 aa).

Substrate contacts are provided by residues arginine 168, 175-176 (WD), asparagine 212, 221-223 (RSQ), 292-294 (RDE), and glycine 324. Catalysis depends on proton donor/acceptor residues aspartate 326 and glutamate 509. Glutamate 525 is a binding site for substrate.

Belongs to the glycosyl hydrolase 37 family. In terms of assembly, monomer.

The protein resides in the cytoplasm. The enzyme catalyses alpha,alpha-trehalose + H2O = alpha-D-glucose + beta-D-glucose. Its pathway is glycan degradation; trehalose degradation; D-glucose from alpha,alpha-trehalose: step 1/1. Hydrolyzes trehalose to glucose. Could be involved, in cells returning to low osmolarity conditions, in the utilization of the accumulated cytoplasmic trehalose, which was synthesized in response to high osmolarity. This Salmonella arizonae (strain ATCC BAA-731 / CDC346-86 / RSK2980) protein is Cytoplasmic trehalase.